A 156-amino-acid chain; its full sequence is MNINATLLGQAISFALFVWFCMKYVWPPLMQAIEERQKKIADGLQAAERAAKDLDLAQANASDQMKEAKRTATEIIDQANKRKSQIIDEAREEAQAERQKILAQAEAELEAERNRARDELRKQVATLAVAGAEKILERTIDKDAQKDILDNITAKL.

A helical transmembrane segment spans residues 7 to 29 (LLGQAISFALFVWFCMKYVWPPL).

The protein belongs to the ATPase B chain family. In terms of assembly, F-type ATPases have 2 components, F(1) - the catalytic core - and F(0) - the membrane proton channel. F(1) has five subunits: alpha(3), beta(3), gamma(1), delta(1), epsilon(1). F(0) has three main subunits: a(1), b(2) and c(10-14). The alpha and beta chains form an alternating ring which encloses part of the gamma chain. F(1) is attached to F(0) by a central stalk formed by the gamma and epsilon chains, while a peripheral stalk is formed by the delta and b chains.

The protein localises to the cell inner membrane. In terms of biological role, f(1)F(0) ATP synthase produces ATP from ADP in the presence of a proton or sodium gradient. F-type ATPases consist of two structural domains, F(1) containing the extramembraneous catalytic core and F(0) containing the membrane proton channel, linked together by a central stalk and a peripheral stalk. During catalysis, ATP synthesis in the catalytic domain of F(1) is coupled via a rotary mechanism of the central stalk subunits to proton translocation. Component of the F(0) channel, it forms part of the peripheral stalk, linking F(1) to F(0). The protein is ATP synthase subunit b 1 of Vibrio campbellii (strain ATCC BAA-1116).